A 127-amino-acid polypeptide reads, in one-letter code: RutC family protein PYRAB12510 (127 aa).

It belongs to the RutC family.

This is RutC family protein PYRAB12510 from Pyrococcus abyssi (strain GE5 / Orsay).